A 395-amino-acid polypeptide reads, in one-letter code: Phosphoprotein (395 aa).

A nuclear localization signal (NLS) region spans residues 65–72 (PVKPRRKK). The tract at residues 178 to 217 (NGVLHGSEIRSKSSSGVIPGVPQSRPQLASSPAHADPAPA) is disordered. Positions 206 to 217 (ASSPAHADPAPA) are enriched in low complexity. Residues 225–234 (IIELLKGLDL) form a nuclear export signal (NES) region.

The protein belongs to the rubulavirus/avulavirus P protein family. As to quaternary structure, interacts with host ARHGAP26; this interaction promotes host RHOA activation. Interacts with host KPNA1 and KPNA6.

It is found in the host cytoplasm. Its function is as follows. Essential component of the RNA polymerase and the nascent chain assembly complex. Also required during RNA synthesis. Also plays a role in viral growth by promoting host RHOA activation and thus actin formation via ARHGAP26 inhibition. The sequence is that of Phosphoprotein (P/V) from Human parainfluenza 2 virus (HPIV-2).